We begin with the raw amino-acid sequence, 379 residues long: Synaptic vesicle membrane protein VAT-1 (379 aa).

The residue at position 273 (serine 273) is a Phosphoserine.

This sequence belongs to the zinc-containing alcohol dehydrogenase family. Quinone oxidoreductase subfamily. Cholinergic synaptic vesicles.

The protein resides in the cytoplasmic vesicle. It is found in the secretory vesicle. The protein localises to the synaptic vesicle membrane. Functionally, may play a central role in the functions mediated by specific classes of synaptic vesicles. This is Synaptic vesicle membrane protein VAT-1 from Tetronarce californica (Pacific electric ray).